The chain runs to 428 residues: 3-phosphoshikimate 1-carboxyvinyltransferase (428 aa).

3-phosphoshikimate is bound by residues lysine 19, serine 20, and arginine 24. Lysine 19 is a binding site for phosphoenolpyruvate. Phosphoenolpyruvate is bound by residues glycine 91 and arginine 119. 3-phosphoshikimate contacts are provided by serine 164, glutamine 166, aspartate 312, and lysine 339. Phosphoenolpyruvate is bound at residue glutamine 166. Aspartate 312 functions as the Proton acceptor in the catalytic mechanism. The phosphoenolpyruvate site is built by arginine 343 and arginine 386.

This sequence belongs to the EPSP synthase family. As to quaternary structure, monomer.

It is found in the cytoplasm. The catalysed reaction is 3-phosphoshikimate + phosphoenolpyruvate = 5-O-(1-carboxyvinyl)-3-phosphoshikimate + phosphate. The protein operates within metabolic intermediate biosynthesis; chorismate biosynthesis; chorismate from D-erythrose 4-phosphate and phosphoenolpyruvate: step 6/7. Its function is as follows. Catalyzes the transfer of the enolpyruvyl moiety of phosphoenolpyruvate (PEP) to the 5-hydroxyl of shikimate-3-phosphate (S3P) to produce enolpyruvyl shikimate-3-phosphate and inorganic phosphate. The protein is 3-phosphoshikimate 1-carboxyvinyltransferase of Bacillus licheniformis (strain ATCC 14580 / DSM 13 / JCM 2505 / CCUG 7422 / NBRC 12200 / NCIMB 9375 / NCTC 10341 / NRRL NRS-1264 / Gibson 46).